Consider the following 391-residue polypeptide: MTSIRKSHLTLKALNESMIDLPAPKNISAWWNFGSLLSLCLALQILTGLFLAMHYTSDISTAFSSVVHICRDVNYGWLIRSIHANGASFFFICIYLHIGRGLYYGSYLNKEAWSAGVILLLLVMMTAFVGYVLPWGQMSFWGATVITNLLSAIPYVGENIVQWLWGGFSVDSATLTRFFAFHFLFPFGIIAMTLVHLLFLHEKGSSNPVGINSNADKIYFHPYFIYKDLIGFAWFALFLITLVLFIPNLLGDPENFTPANPLVTPPHIKPEWYFLFAYAILRSIPNKLGGVFALLASILILLIVPILHTSKWQNFAFRPLAQIFMGLLVVDVAILTWIGGMPVEPPFIIIGQIASFLYFFLFLVFFPLSGWLENKMLESCTKSSALRALVL.

Helical transmembrane passes span 33–53 (FGSL…FLAM), 77–98 (WLIR…YLHI), 113–133 (WSAG…GYVL), and 178–198 (FFAF…VHLL). H83 and H97 together coordinate heme b. Residues H182 and H196 each contribute to the heme b site. An a ubiquinone-binding site is contributed by H201. Transmembrane regions (helical) follow at residues 226-246 (YKDL…VLFI), 288-308 (LGGV…PILH), 320-340 (LAQI…WIGG), and 347-367 (FIII…VFFP).

Belongs to the cytochrome b family. The cytochrome bc1 complex contains 3 respiratory subunits (MT-CYB, CYC1 and UQCRFS1), 2 core proteins (UQCRC1 and UQCRC2) and probably 6 low-molecular weight proteins. It depends on heme b as a cofactor.

The protein localises to the mitochondrion inner membrane. Functionally, component of the ubiquinol-cytochrome c reductase complex (complex III or cytochrome b-c1 complex) that is part of the mitochondrial respiratory chain. The b-c1 complex mediates electron transfer from ubiquinol to cytochrome c. Contributes to the generation of a proton gradient across the mitochondrial membrane that is then used for ATP synthesis. This is Cytochrome b (mt-cyb) from Kryptolebias marmoratus (Mangrove killifish).